Here is a 324-residue protein sequence, read N- to C-terminus: Holliday junction branch migration complex subunit RuvB (324 aa).

The segment at 1–168 (MEDLALRPKT…FGIVEHLEYY (168 aa)) is large ATPase domain (RuvB-L). Residues Leu6, Arg7, Gly48, Lys51, Thr52, Thr53, 115–117 (EDF), Arg158, Tyr168, and Arg205 contribute to the ATP site. A Mg(2+)-binding site is contributed by Thr52. Residues 169 to 239 (TPEELAQGVM…RALEALAALG (71 aa)) form a small ATPAse domain (RuvB-S) region. The segment at 242-324 (ELGLEKRDRE…PPPVGPLLEP (83 aa)) is head domain (RuvB-H). 2 residues coordinate DNA: Arg297 and Arg302.

It belongs to the RuvB family. As to quaternary structure, homohexamer. Forms an RuvA(8)-RuvB(12)-Holliday junction (HJ) complex. HJ DNA is sandwiched between 2 RuvA tetramers; dsDNA enters through RuvA and exits via RuvB. An RuvB hexamer assembles on each DNA strand where it exits the tetramer. Each RuvB hexamer is contacted by two RuvA subunits (via domain III) on 2 adjacent RuvB subunits; this complex drives branch migration. In the full resolvosome a probable DNA-RuvA(4)-RuvB(12)-RuvC(2) complex forms which resolves the HJ.

Its subcellular location is the cytoplasm. The catalysed reaction is ATP + H2O = ADP + phosphate + H(+). With respect to regulation, the ATPase activity of RuvB is enhanced by RuvA. The RuvA-RuvB-RuvC complex processes Holliday junction (HJ) DNA during genetic recombination and DNA repair, while the RuvA-RuvB complex plays an important role in the rescue of blocked DNA replication forks via replication fork reversal (RFR). RuvA specifically binds to HJ cruciform DNA, conferring on it an open structure. The RuvB hexamer acts as an ATP-dependent pump, pulling dsDNA into and through the RuvAB complex. RuvB forms 2 homohexamers on either side of HJ DNA bound by 1 or 2 RuvA tetramers; 4 subunits per hexamer contact DNA at a time. Coordinated motions by a converter formed by DNA-disengaged RuvB subunits stimulates ATP hydrolysis and nucleotide exchange. Immobilization of the converter enables RuvB to convert the ATP-contained energy into a lever motion, pulling 2 nucleotides of DNA out of the RuvA tetramer per ATP hydrolyzed, thus driving DNA branch migration. The RuvB motors rotate together with the DNA substrate, which together with the progressing nucleotide cycle form the mechanistic basis for DNA recombination by continuous HJ branch migration. Branch migration allows RuvC to scan DNA until it finds its consensus sequence, where it cleaves and resolves cruciform DNA. Its function is as follows. Has Mg(2+)-, DNA-dependent ATPase activity; dsDNA and supercoiled DNA but not ssDNA stimulate activity. Binds to linear dsDNA in the absence of ATP or ATP-gamma-S. This subunit can promote Holliday junction migration alone in vitro. Partially complements an E.coli deletion for UV sensitivity. In Thermus thermophilus, this protein is Holliday junction branch migration complex subunit RuvB.